Consider the following 90-residue polypeptide: Small ribosomal subunit protein bS20 (90 aa).

A compositionally biased stretch (basic residues) spans 1–15 (MANHKSAQKRIRQTK). The interval 1–22 (MANHKSAQKRIRQTKTRTERNR) is disordered.

This sequence belongs to the bacterial ribosomal protein bS20 family.

Binds directly to 16S ribosomal RNA. This chain is Small ribosomal subunit protein bS20, found in Helicobacter hepaticus (strain ATCC 51449 / 3B1).